Consider the following 537-residue polypeptide: Cytochrome P450 27C1 (537 aa).

C483 is a heme binding site.

This sequence belongs to the cytochrome P450 family. Heme serves as cofactor. In terms of tissue distribution, expressed in the dorsal third of retinal pigment epithelium, but not in the ventral counterpart (at protein level).

The protein localises to the membrane. The catalysed reaction is all-trans-retinol + 2 reduced [adrenodoxin] + O2 + 2 H(+) = all-trans-3,4-didehydroretinol + 2 oxidized [adrenodoxin] + 2 H2O. In terms of biological role, efficiently catalyzes the conversion of all-trans retinol (also called vitamin A1, the precursor of 11-cis retinal) to 3,4-didehydroretinol (also called vitamin A2, the precursor of 11-cis 3,4-didehydroretinal), also acts on all-trans retinal and all-trans retinoic acid. The replacement of 11-cis retinal chromophore in photopigments with 11-cis 3,4-didehydroretinal enhances sensitivity to long-wavelength light. This may improve vision in fresh water which is often turbid. This is Cytochrome P450 27C1 (cyp27c1) from Aquarana catesbeiana (American bullfrog).